Here is a 130-residue protein sequence, read N- to C-terminus: MRKNSVKNTRINGEVLKELSNIIRSEIKDPRINPMTSVVAVEVAPDLKTCKAYISVLGDEKSQKDTITGLKSAEGYIRRQLARTVNLRNTPEIRFILDQSIEYGINMSKLIDEVTEHDNKMHVEVEDETE.

Belongs to the RbfA family. In terms of assembly, monomer. Binds 30S ribosomal subunits, but not 50S ribosomal subunits or 70S ribosomes.

The protein resides in the cytoplasm. In terms of biological role, one of several proteins that assist in the late maturation steps of the functional core of the 30S ribosomal subunit. Associates with free 30S ribosomal subunits (but not with 30S subunits that are part of 70S ribosomes or polysomes). Required for efficient processing of 16S rRNA. May interact with the 5'-terminal helix region of 16S rRNA. This Lachnospira eligens (strain ATCC 27750 / DSM 3376 / VPI C15-48 / C15-B4) (Eubacterium eligens) protein is Ribosome-binding factor A.